The chain runs to 116 residues: Ribosome-binding factor A (116 aa).

The protein belongs to the RbfA family. Monomer. Binds 30S ribosomal subunits, but not 50S ribosomal subunits or 70S ribosomes.

It is found in the cytoplasm. In terms of biological role, one of several proteins that assist in the late maturation steps of the functional core of the 30S ribosomal subunit. Associates with free 30S ribosomal subunits (but not with 30S subunits that are part of 70S ribosomes or polysomes). Required for efficient processing of 16S rRNA. May interact with the 5'-terminal helix region of 16S rRNA. The chain is Ribosome-binding factor A from Ureaplasma parvum serovar 3 (strain ATCC 27815 / 27 / NCTC 11736).